A 23-amino-acid polypeptide reads, in one-letter code: Basic phospholipase A2 intermexin (23 aa).

It belongs to the phospholipase A2 family. Group II subfamily. It depends on Ca(2+) as a cofactor. In terms of processing, contains 7 disulfide bonds. As to expression, expressed by the venom gland.

Its subcellular location is the secreted. It catalyses the reaction a 1,2-diacyl-sn-glycero-3-phosphocholine + H2O = a 1-acyl-sn-glycero-3-phosphocholine + a fatty acid + H(+). In terms of biological role, snake venom phospholipase A2 (PLA2) that shows presynaptic neurotoxicity and low myotoxicity. PLA2 catalyzes the calcium-dependent hydrolysis of the 2-acyl groups in 3-sn-phosphoglycerides. The protein is Basic phospholipase A2 intermexin of Gloydius intermedius (Central Asian pit viper).